The following is a 491-amino-acid chain: Probable V-type proton ATPase subunit B 1 (491 aa).

Arginine 380 is a binding site for ATP.

The protein belongs to the ATPase alpha/beta chains family. V-ATPase is a heteromultimeric enzyme made up of two complexes: the ATP-hydrolytic V1 complex and the proton translocation V0 complex. The V1 complex consists of three catalytic AB heterodimers that form a heterohexamer, three peripheral stalks each consisting of EG heterodimers, one central rotor including subunits D and F, and the regulatory subunits C and H. The proton translocation complex V0 consists of the proton transport subunit a, a ring of proteolipid subunits c9c'', rotary subunit d, subunits e and f, and the accessory subunits vah-19/Ac45 and vah-20/PRR.

In terms of biological role, non-catalytic subunit of the V1 complex of vacuolar(H+)-ATPase (V-ATPase), a multisubunit enzyme composed of a peripheral complex (V1) that hydrolyzes ATP and a membrane integral complex (V0) that translocates protons. V-ATPase is responsible for acidifying and maintaining the pH of intracellular compartments and in some cell types, is targeted to the plasma membrane, where it is responsible for acidifying the extracellular environment. Essential for the proper assembly and activity of V-ATPase. Required maternally for early embryogenesis and zygotically during morphogenesis. Specifically, involved in the clearance of apoptotic cell corpses in embryos. Also, during embryonic development, the V-ATPase is required to repress fusion of epidermal cells probably by negatively regulating eff-1-mediated cell fusion. In neurons, required for necrotic cell death by promoting intracellular acidification. Required for cell death induced by hypoxia. Required for acidification of synaptic vesicles and the release of neurotransmitters from adult neurons. This is Probable V-type proton ATPase subunit B 1 from Caenorhabditis briggsae.